The primary structure comprises 39 residues: Photosystem II reaction center protein J (39 aa).

A helical membrane pass occupies residues 7-27 (IPLWIVAVVAGLGVITVVGLF).

Belongs to the PsbJ family. As to quaternary structure, PSII is composed of 1 copy each of membrane proteins PsbA, PsbB, PsbC, PsbD, PsbE, PsbF, PsbH, PsbI, PsbJ, PsbK, PsbL, PsbM, PsbT, PsbX, PsbY, PsbZ, Psb30/Ycf12, peripheral proteins PsbO, CyanoQ (PsbQ), PsbU, PsbV and a large number of cofactors. It forms dimeric complexes.

The protein localises to the cellular thylakoid membrane. Functionally, one of the components of the core complex of photosystem II (PSII). PSII is a light-driven water:plastoquinone oxidoreductase that uses light energy to abstract electrons from H(2)O, generating O(2) and a proton gradient subsequently used for ATP formation. It consists of a core antenna complex that captures photons, and an electron transfer chain that converts photonic excitation into a charge separation. This is Photosystem II reaction center protein J from Synechococcus sp. (strain JA-2-3B'a(2-13)) (Cyanobacteria bacterium Yellowstone B-Prime).